The sequence spans 452 residues: tRNA modification GTPase MnmE (452 aa).

(6S)-5-formyl-5,6,7,8-tetrahydrofolate contacts are provided by R24, E81, and R120. The TrmE-type G domain occupies G216–D373. Residues N226–S231, S245–T251, and D270–G273 each bind GTP. Residues S230 and T251 each contribute to the Mg(2+) site. K452 is a (6S)-5-formyl-5,6,7,8-tetrahydrofolate binding site.

This sequence belongs to the TRAFAC class TrmE-Era-EngA-EngB-Septin-like GTPase superfamily. TrmE GTPase family. As to quaternary structure, homodimer. Heterotetramer of two MnmE and two MnmG subunits. K(+) is required as a cofactor.

The protein resides in the cytoplasm. In terms of biological role, exhibits a very high intrinsic GTPase hydrolysis rate. Involved in the addition of a carboxymethylaminomethyl (cmnm) group at the wobble position (U34) of certain tRNAs, forming tRNA-cmnm(5)s(2)U34. The sequence is that of tRNA modification GTPase MnmE from Opitutus terrae (strain DSM 11246 / JCM 15787 / PB90-1).